Here is a 152-residue protein sequence, read N- to C-terminus: Ribosomal RNA large subunit methyltransferase H (152 aa).

Residues L68, G100, and 119–124 (LGVMTW) contribute to the S-adenosyl-L-methionine site.

This sequence belongs to the RNA methyltransferase RlmH family. Homodimer.

It is found in the cytoplasm. The enzyme catalyses pseudouridine(1915) in 23S rRNA + S-adenosyl-L-methionine = N(3)-methylpseudouridine(1915) in 23S rRNA + S-adenosyl-L-homocysteine + H(+). Specifically methylates the pseudouridine at position 1915 (m3Psi1915) in 23S rRNA. This chain is Ribosomal RNA large subunit methyltransferase H, found in Rhodospirillum rubrum (strain ATCC 11170 / ATH 1.1.1 / DSM 467 / LMG 4362 / NCIMB 8255 / S1).